Consider the following 205-residue polypeptide: Max-like protein homolog 2 (205 aa).

Low complexity-rich tracts occupy residues 1–12 (MSRSRSAAASSS) and 26–40 (SASS…ATNS). Residues 1-58 (MSRSRSAAASSSQKPDDMDLMSPDGSASSPSAPNTPATNSGGFSSDRKKATHLRCERQ) are disordered. Residues 45–58 (SDRKKATHLRCERQ) are compositionally biased toward basic and acidic residues. The segment at 47-60 (RKKATHLRCERQRR) is basic motif. A bHLH domain is found at 47–101 (RKKATHLRCERQRREAINSGYSDLKDLIPQTTTSLGCKTTNAAILFRACDFMSQL). The interval 61-101 (EAINSGYSDLKDLIPQTTTSLGCKTTNAAILFRACDFMSQL) is helix-loop-helix motif. A coiled-coil region spans residues 98–132 (MSQLKTDISDADKQLAQLNAQAAALEMIASEYEQM).

As to expression, widely expressed.

The protein localises to the nucleus. The protein resides in the cytoplasm. It localises to the mitochondrion. Functionally, transcription factor. Binds to the E box motif 5'-CACGTG-3', probably in a heterodimeric complex with mml-1. Involved in modulating longevity in response to TOR signaling, dietary restriction, the decline in protein homeostasis associated with normal aging, germline signaling and the insulin-like signaling pathway. Plays a role in autophagy. Involved in regulating migration of the ray 1 precursor cells in the male tail, acting in concert with Wnt and semaphorin signaling pathways. Regulates transcription of genes encoding extracellular matrix (ECM) components which may contribute to the substratum required for migration of the neighboring ray 1 precursor cells. Required for resistance to oxidative stress. Involved in promoting infection by the microsporidian pathogen N.parisii, probably acting independently of its canonical partner, mml-1. The sequence is that of Max-like protein homolog 2 from Caenorhabditis elegans.